A 59-amino-acid polypeptide reads, in one-letter code: Large ribosomal subunit protein bL32 (59 aa).

Over residues 1-16 (MAVPKRKTSPSKRGMR) the composition is skewed to basic residues. Residues 1–20 (MAVPKRKTSPSKRGMRRSHD) form a disordered region.

This sequence belongs to the bacterial ribosomal protein bL32 family.

In Sphingopyxis alaskensis (strain DSM 13593 / LMG 18877 / RB2256) (Sphingomonas alaskensis), this protein is Large ribosomal subunit protein bL32.